The primary structure comprises 297 residues: tRNA uridine(34) hydroxylase (297 aa).

Residues 137–232 (RGDDVVFFDG…YGEKYGDKGL (96 aa)) form the Rhodanese domain. Cysteine 192 acts as the Cysteine persulfide intermediate in catalysis.

Belongs to the TrhO family.

It catalyses the reaction uridine(34) in tRNA + AH2 + O2 = 5-hydroxyuridine(34) in tRNA + A + H2O. Its function is as follows. Catalyzes oxygen-dependent 5-hydroxyuridine (ho5U) modification at position 34 in tRNAs. In Corynebacterium urealyticum (strain ATCC 43042 / DSM 7109), this protein is tRNA uridine(34) hydroxylase.